The following is a 90-amino-acid chain: U7-theraphotoxin-Hhn1e (90 aa).

Positions 1–19 (MKTAIFTVVLALAVFAVLS) are cleaved as a signal peptide. Positions 20–50 (FGWEANEKALSEEFTELIHEKEAASETEARE) are excised as a propeptide. 3 disulfide bridges follow: Cys51-Cys65, Cys58-Cys70, and Cys64-Cys81.

The protein belongs to the neurotoxin 10 (Hwtx-1) family. 13 (Hntx-13) subfamily. As to expression, expressed by the venom gland.

Its subcellular location is the secreted. Its function is as follows. Ion channel inhibitor. The chain is U7-theraphotoxin-Hhn1e from Cyriopagopus hainanus (Chinese bird spider).